Reading from the N-terminus, the 86-residue chain is MTNIKSQQKRNRTNERARLRNKSVKSSLRTAVRAFREAVHAGEKEKAAKLLVSTSRKLDKAASKGVIHKNQAANKKSALARTLNKL.

The interval 1–25 (MTNIKSQQKRNRTNERARLRNKSVK) is disordered.

This sequence belongs to the bacterial ribosomal protein bS20 family.

Binds directly to 16S ribosomal RNA. The sequence is that of Small ribosomal subunit protein bS20 from Mycobacterium leprae (strain Br4923).